Here is a 619-residue protein sequence, read N- to C-terminus: Nuclear hormone receptor family member nhr-6 (619 aa).

Over residues 1-18 (MEQLSIQTDELQDQFSNC) the composition is skewed to polar residues. 4 disordered regions span residues 1–29 (MEQLSIQTDELQDQFSNCSPASVDSSYSS), 58–86 (MSKNSSCSSSFDYGEFGPSSSSRKGSKTT), 103–134 (QVNTVPKPTKTEVESIPEEFEQKPSSSSHRLP), and 196–232 (QHFPVSDSRRGSQGTTSSSNNTGGTPSPHSSSLPTSP). The span at 19–29 (SPASVDSSYSS) shows a compositional bias: low complexity. A compositionally biased stretch (polar residues) spans 125-134 (KPSSSSHRLP). Residues 206-232 (GSQGTTSSSNNTGGTPSPHSSSLPTSP) show a composition bias toward low complexity. Residues 265–340 (DKMCAVCNDR…VGMVKEIVRH (76 aa)) constitute a DNA-binding region (nuclear receptor). NR C4-type zinc fingers lie at residues 268–288 (CAVCNDRAVCLHYGARTCEGC) and 304–328 (CAGNKTCPIDKRYRSRCQYCRYQKC). Residues 345–365 (GRRGRLSSKTKLARSEDQPSP) are disordered. A compositionally biased stretch (basic residues) spans 346–356 (RRGRLSSKTKL). The NR LBD domain maps to 365 to 600 (PPLPLLALMG…STDAPPACGS (236 aa)). Residues 589–600 (LRSTDAPPACGS) are AF-2.

The protein belongs to the nuclear hormone receptor family. NR4 subfamily. In terms of tissue distribution, in hermaphrodites, expressed in the developing spermatheca and dorsal uterus. Expression includes the 8 cells of the dorsal somatic gonad primordium and the sujc cells that form the core of the spermatheca-uterine valve. Expressed in the precursor cells of the spermatheca-sheath lineages (SS cells) and in the precursors and descendents of the dorsal-uterine lineage (DU cells). In both hermaphroditic and male animals, expressed in a pair of head chemosensory neurons.

It is found in the nucleus. Transcriptional activator that induces gene expression by binding to the NGFI-B response element (NBRE) 5'-AAAGGTCA-3'. Required for proper morphogenesis of the spermatheca and the spermatheca-uterine valve formation. Promotes cell proliferation and differentiation of the spermatheca precursor cells during spermatheca development in larval stage L4. Might play a role in promoting G1/S phase progression in the spermatheca precursor cell lineage. Also required for the differentiation of the spermatheca-uterine junction core (sujc) cells which are generating the spermatheca-uterine valve. This Caenorhabditis elegans protein is Nuclear hormone receptor family member nhr-6 (nhr-6).